Here is a 6713-residue protein sequence, read N- to C-terminus: Extracellular matrix-binding protein EbhA (6713 aa).

44 FIVAR domains span residues 1–58, 126–184, 252–310, 378–436, 504–562, 630–688, 756–814, 882–940, 1008–1066, 1134–1192, 1260–1318, 1386–1444, 1512–1570, 1638–1696, 1764–1822, 1890–1948, 2142–2200, 2268–2325, 2393–2451, 2519–2577, 2645–2703, 2771–2829, 2897–2955, 3023–3081, 3149–3207, 3275–3333, 3401–3459, 3527–3585, 3653–3711, 3779–3837, 3905–3963, 4031–4089, 4157–4218, 4283–4341, 4409–4467, 4535–4592, 4660–4718, 4786–4844, 4912–4970, 5038–5096, 5164–5222, 5290–5344, 5412–5471, and 5666–5722; these read MGNL…VEQA, AMGQ…VTAA, AMKG…ITQA, QMGN…VEAA, AMAN…VENA, AMGT…INQI, AMGQ…VDRA, AMNS…VDNA, AMGA…INDM, AMTA…VNSA, AMHS…VEQA, AMGQ…VERA, AMTA…VTNA, AMKG…INQA, AMTN…VETA, AMNQ…INQK, AMGN…VQAA, AMGQ…VEAA, AMQR…VEQA, AMDQ…VTAA, AMNQ…VTQA, AMER…VEAA, AMGN…VEAA, AMDK…INQA, AMGN…VEQA, AMTQ…ITAA, AMTQ…IQQA, AMTN…VEQA, AMTQ…VAQA, AMGT…VTKA, AMGN…ITRA, AMDQ…ITNE, AMEL…VNGA, AMHG…INQV, LMDA…VSSA, AMKA…IDQA, AMEA…VEQL, AMQA…VEQL, AMET…VEQA, SMDQ…VDQA, AMDQ…VIKL, and AMET…INGA. The chain crosses the membrane as a helical span at residues 6518 to 6540; the sequence is VIKNAIGVVGISGLLASFWFFIA. Residues 6616–6713 form a disordered region; sequence RRKEDEEDVE…KKKKSKKNKK (98 aa). Composition is skewed to basic and acidic residues over residues 6631 to 6641 and 6680 to 6690; these read TDEKVLKDNEH and QKDNQSKDKKS. Basic residues predominate over residues 6695-6713; sequence TSKKVAAKKKKKKSKKNKK.

It localises to the cell membrane. This Staphylococcus aureus (strain Mu3 / ATCC 700698) protein is Extracellular matrix-binding protein EbhA (ebhA).